Consider the following 98-residue polypeptide: PqqA binding protein (98 aa).

It belongs to the PqqD family. As to quaternary structure, monomer. Interacts with PqqE.

It functions in the pathway cofactor biosynthesis; pyrroloquinoline quinone biosynthesis. Its function is as follows. Functions as a PqqA binding protein and presents PqqA to PqqE, in the pyrroloquinoline quinone (PQQ) biosynthetic pathway. The chain is PqqA binding protein from Rhizobium meliloti (strain 1021) (Ensifer meliloti).